Consider the following 885-residue polypeptide: DNA polymerase eta (885 aa).

Positions 18 to 274 (VLLVDMDCFF…LPVGKIKGLG (257 aa)) constitute a UmuC domain. Mg(2+) is bound by residues aspartate 22 and methionine 23. Positions 22 and 23 each coordinate Mn(2+). Arginine 70 contributes to the a 2'-deoxyribonucleoside 5'-triphosphate binding site. Residues aspartate 125 and glutamate 126 each contribute to the Mg(2+) site. Residues aspartate 125 and glutamate 126 each coordinate Mn(2+). Glutamate 126 is an active-site residue. Disordered stretches follow at residues 599 to 653 (AIEA…DLYV) and 658 to 677 (VPPT…RKFD). The span at 608–618 (FEEDTEEETEL) shows a compositional bias: acidic residues. A compositionally biased stretch (polar residues) spans 628 to 649 (EGQSSDAGQEQDPNTLNDSTGN). Residues 701 to 737 (DILPTIKCDQCGANIPDEVKSLQTHRDHHFAQELSRT) form a UBZ3-type 1 zinc finger. Positions 708, 711, 725, and 729 each coordinate Zn(2+). The segment at 722 to 783 (LQTHRDHHFA…YSTAPPSNSI (62 aa)) is disordered. Residues 739–748 (RSTEREERTQ) show a composition bias toward basic and acidic residues. Residues 766–780 (TAGSGSSSYSTAPPS) are compositionally biased toward low complexity. Residues 798-832 (SDPQMNQCPECKAFIKCVDMPEHLDYHVARNLQRE) form a UBZ3-type 2 zinc finger. Zn(2+) contacts are provided by cysteine 805, cysteine 808, histidine 820, and histidine 824. A disordered region spans residues 846–870 (NKEKISPVQPKKQSQKKLNSTISAS).

The protein belongs to the DNA polymerase type-Y family. As to quaternary structure, interacts (via C-terminus) with nopo. Mg(2+) serves as cofactor. It depends on Mn(2+) as a cofactor. In terms of processing, ubiquitination enhanced by nopo. As to expression, expressed in ovaries and testes.

The protein localises to the nucleus. The enzyme catalyses DNA(n) + a 2'-deoxyribonucleoside 5'-triphosphate = DNA(n+1) + diphosphate. Its activity is regulated as follows. The enzyme in complex with the DNA substrate binds a third divalent metal cation. This binding is essential for catalyzing the DNA synthesis. DNA polymerase specifically involved in the DNA repair by translesion synthesis (TLS). Plays an important role in translesion synthesis, where the normal high-fidelity DNA polymerases cannot proceed and DNA synthesis stalls. Inserts one or 2 nucleotide(s) opposite the lesion. During homologous recombination (HR) repair, has a overlapping role with the error-prone translesion polymerase PolZ1/DNApol-zeta to initiate repair synthesis that is completed by end joining or another polymerase that can bind and reinitiate synthesis. Particularly important for the repair of UV-induced pyrimidine dimers and for hydroxyurea (HU)-induced DNA damage. Although inserts the correct base, may cause base transitions and transversions depending upon the context. Forms a Schiff base with 5'-deoxyribose phosphate at abasic sites, but does not have any lyase activity, preventing the release of the 5'-deoxyribose phosphate (5'-dRP) residue. This covalent trapping of the enzyme by the 5'-dRP residue inhibits its DNA synthetic activity during base excision repair, thereby avoiding high incidence of mutagenesis. This Drosophila melanogaster (Fruit fly) protein is DNA polymerase eta.